Consider the following 137-residue polypeptide: Large-conductance mechanosensitive channel (137 aa).

2 helical membrane-spanning segments follow: residues 10–30 (FAMRGNVVDLAVGVIIGAAFG) and 76–96 (GVFIQNVFDFVIVAFAIFVAI).

Belongs to the MscL family. In terms of assembly, homopentamer.

The protein localises to the cell inner membrane. Channel that opens in response to stretch forces in the membrane lipid bilayer. May participate in the regulation of osmotic pressure changes within the cell. In Salmonella choleraesuis (strain SC-B67), this protein is Large-conductance mechanosensitive channel.